The following is a 378-amino-acid chain: MFLLFFIVHWLKIMLPFFAQVGLEENLHETLDFTEKFLSGLENLQGLNEDDIQVGFTPKEAVYQEDKVILYRFQPVVENPLPIPVLIVYALVNRPYMVDLQEGRSLVANLLKLGLDVYLIDWGYPSRGDRWLTLEDYLSGYLNNCVDIICQRSQQEKITLLGVCQGGTFSLCYASLFPDKVKNLVVMVAPVDFEQPGTLLNARGGCTLGAEAVDIDLMVDAMGNIPGDYLNLEFLMLKPLQLGYQKYLDVPDIMGDEAKLLNFLRMEKWIFDSPDQAGETYRQFLKDFYQQNKLIKGEVMIGDRLVDLHNLTMPILNLYAEKDHLVAPASSLALGDYLPENCDYTVQSFPVGHIGMYVSGKVQRDLPPAIAHWLSERQ.

Positions 84 to 356 constitute an AB hydrolase-1 domain; the sequence is PVLIVYALVN…QSFPVGHIGM (273 aa).

The protein belongs to the PHA/PHB synthase family. Type III PhaC subfamily. As to quaternary structure, forms a heterodimer with PhaE, which may multimerize in the presence of 3-hydroxybutyryl-CoA. Both subunits are required for PHB synthesis in E.coli and in PHA-negative A.eutrophus.

The protein localises to the cytoplasm. The enzyme catalyses (3R)-3-hydroxybutanoyl-CoA + [(3R)-hydroxybutanoate](n) = [(3R)-hydroxybutanoate](n+1) + CoA. The protein operates within biopolymer metabolism; poly-(R)-3-hydroxybutanoate biosynthesis. Functionally, when expressed in E.coli with Synechocystis PhaE and C.necator PhaA and PhaB, confers the ability to synthesize up to 13% (w/w) poly(3-hydroxybutyrate) (PHB) depending on the carbon source; all 4 genes are necessary for PHB production. Cell-free in vitro coexpression with PhaE gives a heterodimer able to polymerize 3-hydroxybutyrate-CoA. The chain is Poly(3-hydroxyalkanoate) polymerase subunit PhaC from Synechocystis sp. (strain ATCC 27184 / PCC 6803 / Kazusa).